Consider the following 267-residue polypeptide: MKLIIEENADKVAEFAARYVVTKINEATENGKYLVLGLPTGSTPLGMYKKLIEFYNAGVISFEKVKTFNMDEYVDLPRDHTESYHSFMFDNFFRHIDINPANIHILDGNTSDHEKECEEYERKIKESGGIDLFVGGIGPDGHIAFNEPGSSLASRTRIKTLNEDTIQANARFFGGDITKVPTQALTVGVQTVMDAREVMILITGSHKALALHQAIECGISHMCTVSAMQMHRCATFIADEDATLELKVKTVKYFKGLMNHHRSLVMF.

Aspartate 71 (proton acceptor; for enolization step) is an active-site residue. Aspartate 140 serves as the catalytic For ring-opening step. Histidine 142 (proton acceptor; for ring-opening step) is an active-site residue. The active-site For ring-opening step is glutamate 147.

It belongs to the glucosamine/galactosamine-6-phosphate isomerase family. In terms of assembly, homohexamer.

It is found in the cytoplasm. The enzyme catalyses alpha-D-glucosamine 6-phosphate + H2O = beta-D-fructose 6-phosphate + NH4(+). Its pathway is nucleotide-sugar biosynthesis; UDP-N-acetyl-alpha-D-glucosamine biosynthesis; alpha-D-glucosamine 6-phosphate from D-fructose 6-phosphate: step 1/1. Its function is as follows. Catalyzes the reversible conversion of alpha-D-glucosamine 6-phosphate (GlcN-6P) into beta-D-fructose 6-phosphate (Fru-6P) and ammonium ion, a regulatory reaction step in de novo uridine diphosphate-N-acetyl-alpha-D-glucosamine (UDP-GlcNAc) biosynthesis via hexosamine pathway. This Caenorhabditis elegans protein is Glucosamine-6-phosphate deaminase.